The chain runs to 333 residues: Tryptophan--tRNA ligase (333 aa).

Residues 11-13 and 19-20 contribute to the ATP site; these read QPS and GN. A 'HIGH' region motif is present at residues 12–20; the sequence is PSGELTIGN. Residue D135 coordinates L-tryptophan. Residues 147-149, V186, and 195-199 each bind ATP; these read GED and KMSKS. Residues 195–199 carry the 'KMSKS' region motif; that stretch reads KMSKS.

This sequence belongs to the class-I aminoacyl-tRNA synthetase family. As to quaternary structure, homodimer.

The protein localises to the cytoplasm. The enzyme catalyses tRNA(Trp) + L-tryptophan + ATP = L-tryptophyl-tRNA(Trp) + AMP + diphosphate + H(+). Its function is as follows. Catalyzes the attachment of tryptophan to tRNA(Trp). The chain is Tryptophan--tRNA ligase from Pasteurella multocida (strain Pm70).